The chain runs to 207 residues: Cytochrome c biogenesis ATP-binding export protein CcmA (207 aa).

The ABC transporter domain maps to 4-207 (LEARELLCER…RISLTQTRAA (204 aa)). 36–43 (GSNGAGKT) lines the ATP pocket.

It belongs to the ABC transporter superfamily. CcmA exporter (TC 3.A.1.107) family. In terms of assembly, the complex is composed of two ATP-binding proteins (CcmA) and two transmembrane proteins (CcmB).

The protein localises to the cell inner membrane. It catalyses the reaction heme b(in) + ATP + H2O = heme b(out) + ADP + phosphate + H(+). Functionally, part of the ABC transporter complex CcmAB involved in the biogenesis of c-type cytochromes; once thought to export heme, this seems not to be the case, but its exact role is uncertain. Responsible for energy coupling to the transport system. The protein is Cytochrome c biogenesis ATP-binding export protein CcmA of Shigella boydii serotype 4 (strain Sb227).